Here is a 313-residue protein sequence, read N- to C-terminus: MKTLLLLIPLVLTACGTLTGIPAHGGGKRFAVEQELVAASSRAAVKEMDLSALKGRKAALYVSVMGDQGSGNISGGRYSIDALIRGGYHNNPESATQYSYPAYDTTATTKSDALSSVTTSTSLLNAPAAALTKNSGRKGERSAGLSVNGTGDYRNETLLANPRDVSFLTNLIQTVFYLRGIEVVPPEYADTDVFVTVDVFGTVRSRTELHLYNAETLKAQTKLEYFAVDRDSRKLLIAPKTAAYESQYQEQYALWMGPYSVGKTVKASDRLMVDFSDITPYGDTTAQNRPDFKQNNGKKPDVGNEVIRRRKGG.

An N-terminal signal peptide occupies residues 1–14 (MKTLLLLIPLVLTA). A lipid anchor (N-palmitoyl cysteine) is attached at Cys15. Cys15 is lipidated: S-diacylglycerol cysteine. Residues 282–297 (GDTTAQNRPDFKQNNG) show a composition bias toward polar residues. Residues 282 to 313 (GDTTAQNRPDFKQNNGKKPDVGNEVIRRRKGG) are disordered.

Belongs to the MafA family.

The protein localises to the cell outer membrane. The protein is Adhesin MafA 2 (mafA2) of Neisseria meningitidis serogroup A / serotype 4A (strain DSM 15465 / Z2491).